The sequence spans 378 residues: O-glycoside alpha-1,2-mannosyltransferase homolog 3 (378 aa).

The Cytoplasmic segment spans residues 1–6 (MGIPKS). Residues 7 to 24 (SIYFCILLFCIISFYLQS) form a helical; Signal-anchor for type II membrane protein membrane-spanning segment. The Lumenal portion of the chain corresponds to 25–378 (SKDGPKELKV…AIKWLENINS (354 aa)). Glu276 functions as the Nucleophile in the catalytic mechanism.

Belongs to the glycosyltransferase 15 family.

It localises to the endoplasmic reticulum membrane. The protein resides in the golgi apparatus membrane. Its function is as follows. Probable mannosyltransferase involved in O-glycosylation of cell wall and secreted proteins. In Schizosaccharomyces pombe (strain 972 / ATCC 24843) (Fission yeast), this protein is O-glycoside alpha-1,2-mannosyltransferase homolog 3 (omh3).